Consider the following 329-residue polypeptide: Protoheme IX farnesyltransferase (329 aa).

The next 7 membrane-spanning stretches (helical) occupy residues 61–81, 108–128, 130–150, 158–178, 186–206, 243–263, and 284–304; these read LACT…LNCL, AFLI…AGVN, LAAG…TIVL, IVIG…AATG, WLFG…ALLL, LLGV…VLPF, and AKGL…LLLL.

This sequence belongs to the UbiA prenyltransferase family. Protoheme IX farnesyltransferase subfamily.

The protein resides in the cell inner membrane. The catalysed reaction is heme b + (2E,6E)-farnesyl diphosphate + H2O = Fe(II)-heme o + diphosphate. Its pathway is porphyrin-containing compound metabolism; heme O biosynthesis; heme O from protoheme: step 1/1. Functionally, converts heme B (protoheme IX) to heme O by substitution of the vinyl group on carbon 2 of heme B porphyrin ring with a hydroxyethyl farnesyl side group. The polypeptide is Protoheme IX farnesyltransferase (Synechococcus sp. (strain RCC307)).